The chain runs to 551 residues: Calcium-dependent protein kinase 13 (551 aa).

Glycine 2 is lipidated: N-myristoyl glycine. A disordered region spans residues 15 to 78 (SFKQTASQRH…APADLGSVLG (64 aa)). Residues 88–346 (YAMGRKLGQG…AHEVLCHPWI (259 aa)) enclose the Protein kinase domain. ATP is bound by residues 94-102 (LGQGQFGTT) and lysine 117. The active-site Proton acceptor is the aspartate 212. An autoinhibitory domain region spans residues 352 to 382 (APDRPLDPAVLSRIKQFSAMNKLKKMALRVI). 4 EF-hand domains span residues 389-424 (EEIAGLKEMFQTMDADNSGAITYDELKEGLRKYGST), 425-460 (LKDTEIRDLMDAADIDNSGTIDYIEFIAATLHLNKL), 461-496 (EREEHLVAAFSYFDKDGSGYITVDELQQACKEHNMP), and 497-530 (DAFLDDVINEADQDNDGRIDYGEFVAMMTKGNMG). Residues aspartate 402, aspartate 404, serine 406, glutamate 413, aspartate 438, aspartate 440, serine 442, threonine 444, glutamate 449, aspartate 474, aspartate 476, serine 478, tyrosine 480, glutamate 485, aspartate 508, aspartate 510, aspartate 512, arginine 514, and glutamate 519 each coordinate Ca(2+).

This sequence belongs to the protein kinase superfamily. Ser/Thr protein kinase family. CDPK subfamily. As to expression, expressed in vascular tissues of crowns and roots, vascular bundles and central cylinder. Expressed in roots, leaf blades, spikelets and developing seeds.

The protein resides in the membrane. The catalysed reaction is L-seryl-[protein] + ATP = O-phospho-L-seryl-[protein] + ADP + H(+). The enzyme catalyses L-threonyl-[protein] + ATP = O-phospho-L-threonyl-[protein] + ADP + H(+). With respect to regulation, activated by calcium. Autophosphorylation may play an important role in the regulation of the kinase activity. In terms of biological role, may play a role in signal transduction pathways that involve calcium as a second messenger. May function in signal transduction pathways that positively regulate responses to cold, salt and drought stresses. This chain is Calcium-dependent protein kinase 13, found in Oryza sativa subsp. japonica (Rice).